A 226-amino-acid polypeptide reads, in one-letter code: Membrane protein (226 aa).

The Virion surface segment spans residues 1 to 11; it reads MSNGSIPVDEV. The chain crosses the membrane as a helical span at residues 12 to 32; sequence IEHLRNWNFTWNIILTILLVV. At 33 to 41 the chain is on the intravirion side; the sequence is LQYGHYKYS. A helical transmembrane segment spans residues 42–62; the sequence is VFLYGVKMAILWILWPLVLAL. The Virion surface segment spans residues 63-75; that stretch reads SLFDAWASFQVNW. Residues 76–96 form a helical membrane-spanning segment; it reads VFFAFSILMACITLMLWIMYF. Over 97–226 the chain is Intravirion; the sequence is VNSIRLWRRT…TDSEKVPHLV (130 aa). Residues 200 to 216 form an interaction with N protein region; the sequence is RSKHGDYSAVSNPSAVL.

The protein belongs to the alphacoronaviruses M protein family. In terms of assembly, homomultimer. Interacts with envelope E protein in the budding compartment of the host cell, which is located between endoplasmic reticulum and the Golgi complex. Forms a complex with HE and S proteins. Interacts with nucleocapsid N protein. This interaction probably participates in RNA packaging into the virus.

The protein resides in the virion membrane. The protein localises to the host Golgi apparatus membrane. Its function is as follows. Component of the viral envelope that plays a central role in virus morphogenesis and assembly via its interactions with other viral proteins. In Sus scrofa (Pig), this protein is Membrane protein.